The following is a 125-amino-acid chain: MVSLREQWNEQARERQREISARKTETVALLQEANQERVRVAQQQKALAIELKNQLAQFHEQLETSVGNWRQETQEQLINLEETRTANAQQQREALFNFRRQLTADVWGETESDSLKVEENTPFVA.

Belongs to the gas vesicle GvpC family.

Its subcellular location is the gas vesicle. In terms of biological role, gas vesicles (GV) are hollow, gas filled proteinaceous nanostructures. During planktonic growth they allow positioning of the organism at a favorable depth for light or nutrient acquisition. This is 17 kDa gas vesicle protein from Dactylococcopsis salina (strain PCC 8305) (Myxobactron salinum).